Reading from the N-terminus, the 690-residue chain is Elongation factor G (690 aa).

A tr-type G domain is found at 8-283 (EDYRNFGIMA…AVVDYLPSPL (276 aa)). Residues 17–24 (AHIDAGKT), 81–85 (DTPGH), and 135–138 (NKMD) contribute to the GTP site.

The protein belongs to the TRAFAC class translation factor GTPase superfamily. Classic translation factor GTPase family. EF-G/EF-2 subfamily.

The protein localises to the cytoplasm. Functionally, catalyzes the GTP-dependent ribosomal translocation step during translation elongation. During this step, the ribosome changes from the pre-translocational (PRE) to the post-translocational (POST) state as the newly formed A-site-bound peptidyl-tRNA and P-site-bound deacylated tRNA move to the P and E sites, respectively. Catalyzes the coordinated movement of the two tRNA molecules, the mRNA and conformational changes in the ribosome. The sequence is that of Elongation factor G from Rhodopseudomonas palustris (strain ATCC BAA-98 / CGA009).